The sequence spans 245 residues: 1-(5-phosphoribosyl)-5-[(5-phosphoribosylamino)methylideneamino] imidazole-4-carboxamide isomerase (245 aa).

D8 functions as the Proton acceptor in the catalytic mechanism. Catalysis depends on D131, which acts as the Proton donor.

This sequence belongs to the HisA/HisF family.

The protein resides in the cytoplasm. It catalyses the reaction 1-(5-phospho-beta-D-ribosyl)-5-[(5-phospho-beta-D-ribosylamino)methylideneamino]imidazole-4-carboxamide = 5-[(5-phospho-1-deoxy-D-ribulos-1-ylimino)methylamino]-1-(5-phospho-beta-D-ribosyl)imidazole-4-carboxamide. It functions in the pathway amino-acid biosynthesis; L-histidine biosynthesis; L-histidine from 5-phospho-alpha-D-ribose 1-diphosphate: step 4/9. The polypeptide is 1-(5-phosphoribosyl)-5-[(5-phosphoribosylamino)methylideneamino] imidazole-4-carboxamide isomerase (Neisseria meningitidis serogroup C / serotype 2a (strain ATCC 700532 / DSM 15464 / FAM18)).